Reading from the N-terminus, the 368-residue chain is Spore germination protein B2 (368 aa).

10 helical membrane passes run 10–30 (FMQT…LTLP), 43–63 (LMIL…LPFL), 82–102 (FIGF…VCFQ), 120–140 (MAVV…GGVY), 145–165 (VYAY…MFSF), 187–207 (LFPK…LVPF), 217–237 (AVAL…LIVI), 282–302 (FACM…IFHL), 308–328 (AWLL…PKDL), and 338–358 (LGYA…LSWI).

This sequence belongs to the amino acid-polyamine-organocation (APC) superfamily. Spore germination protein (SGP) (TC 2.A.3.9) family.

It localises to the cell membrane. In terms of biological role, involved in the response to the germinative mixture of L-asparagine, glucose, fructose and potassium ions (AGFK). Could be an amino acid transporter. Cannot stimulate germination in the absence of gerD and gerK gene products (fructose and glucose receptors, respectively). The protein is Spore germination protein B2 (gerBB) of Bacillus subtilis (strain 168).